We begin with the raw amino-acid sequence, 189 residues long: Lipid A acyltransferase PagP (189 aa).

Positions 1-24 are cleaved as a signal peptide; that stretch reads MLRRFSLFSLGFLGWLLVSGNASA. Residues His61, Asp104, and Ser105 contribute to the active site.

The protein belongs to the lipid A palmitoyltransferase family. Homodimer.

It is found in the cell outer membrane. The catalysed reaction is a lipid A + a 1,2-diacyl-sn-glycero-3-phosphocholine = a hepta-acyl lipid A + a 2-acyl-sn-glycero-3-phosphocholine. It catalyses the reaction a lipid IVA + a 1,2-diacyl-sn-glycero-3-phosphocholine = a lipid IVB + a 2-acyl-sn-glycero-3-phosphocholine. It carries out the reaction a lipid IIA + a 1,2-diacyl-sn-glycero-3-phosphocholine = a lipid IIB + a 2-acyl-sn-glycero-3-phosphocholine. Its function is as follows. Transfers a fatty acid residue from the sn-1 position of a phospholipid to the N-linked hydroxyfatty acid chain on the proximal unit of lipid A or its precursors. The chain is Lipid A acyltransferase PagP from Klebsiella pneumoniae subsp. pneumoniae (strain ATCC 700721 / MGH 78578).